The primary structure comprises 130 residues: Probable pilin MJ0835.1 (130 aa).

The propeptide occupies 1 to 14; the sequence is MNTMENKIIKSKKA. A QXSXEXXXL motif is present at residues 15 to 23; that stretch reads QVSLEFSFL.

The N-terminus is cleaved by the prepilin peptidase EppA, which recognizes the class III signal sequence.

The protein localises to the secreted. The protein resides in the cell surface. It localises to the fimbrium. In Methanocaldococcus jannaschii (strain ATCC 43067 / DSM 2661 / JAL-1 / JCM 10045 / NBRC 100440) (Methanococcus jannaschii), this protein is Probable pilin MJ0835.1.